The primary structure comprises 545 residues: Heparanase (545 aa).

The signal sequence occupies residues 1-37 (MLACRKPGLRPPLLLLLPLLGPLGPCSPGTPAAAAPA). 64 to 66 (DAN) serves as a coordination point for heparan sulfate group. The propeptide at 112–159 (PAFEERSYWLSQSNQDICKSGSIPSDVEEKLRLEWPFQEQVLLREQYQ) is linker peptide. The cysteines at positions 129 and 181 are disulfide-linked. Residue 160 to 164 (KKFTN) coordinates heparan sulfate group. 2 N-linked (GlcNAc...) asparagine glycosylation sites follow: asparagine 164 and asparagine 219. The Proton donor role is filled by glutamate 227. Heparan sulfate group-binding positions include 272 to 282 (QPRRNTVKMLK), histidine 298, and arginine 305. A required for heterodimerization with the heparanase 8 kDa subunit region spans residues 290 to 419 (EVIDSVTWHH…LLFKKLVGNK (130 aa)). The Nucleophile role is filled by glutamate 345. Heparan sulfate group-binding positions include 350 to 352 (FGG) and 391 to 393 (GNY). Cysteine 439 and cysteine 544 are oxidised to a cystine. Asparagine 461 carries an N-linked (GlcNAc...) asparagine glycan. The tract at residues 529–545 (FSYGFFVIRNAKVAACI) is required for transferring proheparanase to the Golgi apparatus, secretion and subsequent enzyme activity and for enhancement of PKB/AKT1 phosphorylation.

The protein belongs to the glycosyl hydrolase 79 family. In terms of assembly, heterodimer; heterodimer formation between the 8 kDa and the 50 kDa subunits is required for enzyme activity. Interacts with TF; the interaction, inhibited by heparin, enhances the generation of activated factor X and activates coagulation. Interacts with HRG; the interaction is enhanced at acidic pH, partially inhibits binding of HPSE to cell surface receptors and modulates its enzymatic activity. Interacts with SDC1; the interaction enhances the shedding of SDC1. Interacts with HPSE2. Post-translationally, proteolytically processed. The cleavage of the 65 kDa form leads to the generation of a linker peptide, and the 8 kDa and the 50 kDa products. The active form, the 8/50 kDa heterodimer, is resistant to degradation. Complete removal of the linker peptide appears to be a prerequisite to the complete activation of the enzyme. N-glycosylated. Glycosylation of the 50 kDa subunit appears to be essential for its solubility. In terms of tissue distribution, highly expressed in placenta and weakly in the kidney, lung, spleen and uterus.

The protein resides in the lysosome membrane. It is found in the secreted. It localises to the nucleus. It carries out the reaction endohydrolysis of (1-&gt;4)-beta-D-glycosidic bonds of heparan sulfate chains in heparan sulfate proteoglycan.. With respect to regulation, inhibited by laminarin sulfate and, to a lower extent, by heparin, sulfamin and EDTA. Activated by calcium and magnesium. Its function is as follows. Endoglycosidase that cleaves heparan sulfate proteoglycans (HSPGs) into heparan sulfate side chains and core proteoglycans. Participates in extracellular matrix (ECM) degradation and remodeling. Selectively cleaves the linkage between a glucuronic acid unit and an N-sulfo glucosamine unit carrying either a 3-O-sulfo or a 6-O-sulfo group. Can also cleave the linkage between a glucuronic acid unit and an N-sulfo glucosamine unit carrying a 2-O-sulfo group, but not linkages between a glucuronic acid unit and a 2-O-sulfated iduronic acid moiety. Essentially inactive at neutral pH but becomes active under acidic conditions such as during tumor invasion and in inflammatory processes. Facilitates cell migration associated with metastasis, wound healing and inflammation. Enhances shedding of syndecans. Acts as a procoagulant by enhancing the generation of activated factor X/F10 in the presence of tissue factor/TF and activated factor VII/F7. Independent of its enzymatic activity, increases cell adhesion to the extracellular matrix (ECM). Enhances AKT1/PKB phosphorylation, possibly via interaction with a lipid raft-resident receptor. Plays a role in the regulation of osteogenesis. Enhances angiogenesis through up-regulation of SRC-mediated activation of VEGF. Implicated in hair follicle inner root sheath differentiation and hair homeostasis. This Bos taurus (Bovine) protein is Heparanase (HPSE).